The sequence spans 65 residues: Metallothionein-B (65 aa).

This sequence belongs to the metallothionein superfamily. Type 4 family.

Metallothioneins have a high content of cysteine residues that bind various heavy metals. This is Metallothionein-B (MTB1) from Strongylocentrotus purpuratus (Purple sea urchin).